Consider the following 246-residue polypeptide: Putative pectinesterase 57 (246 aa).

Residues asparagine 127 and asparagine 143 are each glycosylated (N-linked (GlcNAc...) asparagine). Threonine 152 contacts substrate. A glycan (N-linked (GlcNAc...) asparagine) is linked at asparagine 174. The active-site Proton donor is the aspartate 205. Aspartate 226 (nucleophile) is an active-site residue.

It belongs to the pectinesterase family.

It carries out the reaction [(1-&gt;4)-alpha-D-galacturonosyl methyl ester](n) + n H2O = [(1-&gt;4)-alpha-D-galacturonosyl](n) + n methanol + n H(+). The protein operates within glycan metabolism; pectin degradation; 2-dehydro-3-deoxy-D-gluconate from pectin: step 1/5. Functionally, acts in the modification of cell walls via demethylesterification of cell wall pectin. This is Putative pectinesterase 57 (PME57) from Arabidopsis thaliana (Mouse-ear cress).